Reading from the N-terminus, the 228-residue chain is Ribonuclease HII (228 aa).

An RNase H type-2 domain is found at 26-214 (RAVAGVDEVG…VRAHSRFPLD (189 aa)). 3 residues coordinate a divalent metal cation: Asp32, Glu33, and Asp124.

The protein belongs to the RNase HII family. Requires Mn(2+) as cofactor. The cofactor is Mg(2+).

Its subcellular location is the cytoplasm. The enzyme catalyses Endonucleolytic cleavage to 5'-phosphomonoester.. Its function is as follows. Endonuclease that specifically degrades the RNA of RNA-DNA hybrids. The chain is Ribonuclease HII from Solibacter usitatus (strain Ellin6076).